Reading from the N-terminus, the 317-residue chain is tRNA-dihydrouridine(20a/20b) synthase [NAD(P)+]-like (317 aa).

FMN-binding positions include 33-35 (PMV) and glutamine 87. The active-site Proton donor is the cysteine 116. FMN contacts are provided by residues lysine 158, histidine 186, 216-218 (NGD), and 240-241 (AR).

This sequence belongs to the Dus family. Dus4 subfamily. It depends on FMN as a cofactor.

The enzyme catalyses 5,6-dihydrouridine(20a) in tRNA + NADP(+) = uridine(20a) in tRNA + NADPH + H(+). It catalyses the reaction 5,6-dihydrouridine(20a) in tRNA + NAD(+) = uridine(20a) in tRNA + NADH + H(+). It carries out the reaction 5,6-dihydrouridine(20b) in tRNA + NAD(+) = uridine(20b) in tRNA + NADH + H(+). The catalysed reaction is 5,6-dihydrouridine(20b) in tRNA + NADP(+) = uridine(20b) in tRNA + NADPH + H(+). Its function is as follows. Catalyzes the synthesis of dihydrouridine, a modified base found in the D-loop of most tRNAs. The protein is tRNA-dihydrouridine(20a/20b) synthase [NAD(P)+]-like (DUS4L) of Homo sapiens (Human).